The chain runs to 438 residues: Exoglucanase 3 (438 aa).

An N-terminal signal peptide occupies residues 1–20 (MFKFAALLALASLVPGFVQA). Residues 21 to 59 (QSPVWGQCGGNGWTGPTTCASGSTCVKQNDFYSQCLPNN) enclose the CBM1 domain. 2 disulfide bridges follow: C28/C45 and C39/C55. Positions 57 to 90 (PNNQAPPSTTTQPGTTPPATTTSGGTGPTSGAGN) are disordered. The linker stretch occupies residues 60–87 (QAPPSTTTQPGTTPPATTTSGGTGPTSG). The span at 61-79 (APPSTTTQPGTTPPATTTS) shows a compositional bias: low complexity. Positions 88–438 (AGNPYTGKTV…TLVANANPAL (351 aa)) are catalytic. 2 cysteine pairs are disulfide-bonded: C170-C229 and C360-C407. The Proton donor role is filled by D215. D393 acts as the Nucleophile in catalysis.

It belongs to the glycosyl hydrolase 6 (cellulase B) family.

It catalyses the reaction Hydrolysis of (1-&gt;4)-beta-D-glucosidic linkages in cellulose and cellotetraose, releasing cellobiose from the non-reducing ends of the chains.. In terms of biological role, shows enzymatic activity towards crystalline cellulose. At long reaction times. It is also able to degrade carboxymethyl cellulose and barley B-glucan. This is Exoglucanase 3 (cel3) from Agaricus bisporus (White button mushroom).